Here is a 495-residue protein sequence, read N- to C-terminus: Trimethylamine methyltransferase MttB2 (495 aa).

Residue Pyl-334 is a non-standard amino acid, pyrrolysine.

Belongs to the trimethylamine methyltransferase family. Can form a complex with MttC.

The enzyme catalyses Co(I)-[trimethylamine-specific corrinoid protein] + trimethylamine + H(+) = methyl-Co(III)-[trimethylamine-specific corrinoid protein] + dimethylamine. The protein operates within one-carbon metabolism; methanogenesis from trimethylamine. Catalyzes the transfer of a methyl group from trimethylamine to the corrinoid cofactor of MttC. The polypeptide is Trimethylamine methyltransferase MttB2 (mttB2) (Methanosarcina mazei (strain ATCC BAA-159 / DSM 3647 / Goe1 / Go1 / JCM 11833 / OCM 88) (Methanosarcina frisia)).